We begin with the raw amino-acid sequence, 366 residues long: Gelsolin-like protein 2 (366 aa).

3 Gelsolin-like repeats span residues 55-139 (NFKV…DLFL), 177-252 (KHIV…HEFY), and 286-327 (KSTV…AQEK). The actin binding stretch occupies residues 100 to 116 (KSTQDEYCVAAYKTVEL). The actin-actin interfilament contact point stretch occupies residues 104-107 (DEYC).

The protein belongs to the villin/gelsolin family. Interacts with actin monomers and filaments. Expressed in circular and longitudinal muscle, pseudohearts, pharynx and gizzard. Not expressed in seminal vesicles.

Its subcellular location is the cytoplasm. The protein localises to the cytoskeleton. Its function is as follows. Calcium-regulated protein that binds to the plus (or barbed) ends of actin monomers or filaments, preventing monomer exchange (end-blocking or capping). Can promote the assembly of monomers into filaments (nucleation) as well as sever existing filaments. This is Gelsolin-like protein 2 from Lumbricus terrestris (Common earthworm).